We begin with the raw amino-acid sequence, 432 residues long: Argininosuccinate lyase (432 aa).

It belongs to the lyase 1 family. Argininosuccinate lyase subfamily.

It is found in the cytoplasm. It carries out the reaction 2-(N(omega)-L-arginino)succinate = fumarate + L-arginine. Its pathway is amino-acid biosynthesis; L-arginine biosynthesis; L-arginine from L-ornithine and carbamoyl phosphate: step 3/3. The polypeptide is Argininosuccinate lyase (Xanthomonas axonopodis pv. citri (strain 306)).